Reading from the N-terminus, the 208-residue chain is Protein-L-isoaspartate O-methyltransferase (208 aa).

The active site involves serine 59.

This sequence belongs to the methyltransferase superfamily. L-isoaspartyl/D-aspartyl protein methyltransferase family.

The protein localises to the cytoplasm. The catalysed reaction is [protein]-L-isoaspartate + S-adenosyl-L-methionine = [protein]-L-isoaspartate alpha-methyl ester + S-adenosyl-L-homocysteine. Functionally, catalyzes the methyl esterification of L-isoaspartyl residues in peptides and proteins that result from spontaneous decomposition of normal L-aspartyl and L-asparaginyl residues. It plays a role in the repair and/or degradation of damaged proteins. This chain is Protein-L-isoaspartate O-methyltransferase, found in Aliivibrio fischeri (strain MJ11) (Vibrio fischeri).